The sequence spans 511 residues: Glucans biosynthesis protein G (511 aa).

The signal sequence occupies residues 1–22 (MMKMRWLSAAVMLTLYTSSSWA).

The protein belongs to the OpgD/OpgG family.

It localises to the periplasm. Its pathway is glycan metabolism; osmoregulated periplasmic glucan (OPG) biosynthesis. In terms of biological role, involved in the biosynthesis of osmoregulated periplasmic glucans (OPGs). The chain is Glucans biosynthesis protein G from Escherichia fergusonii (strain ATCC 35469 / DSM 13698 / CCUG 18766 / IAM 14443 / JCM 21226 / LMG 7866 / NBRC 102419 / NCTC 12128 / CDC 0568-73).